A 796-amino-acid chain; its full sequence is Protein translocase subunit SecA 2 (796 aa).

Residues glutamine 84, 102 to 106, and aspartate 496 contribute to the ATP site; that span reads GEGKT.

The protein belongs to the SecA family. In terms of assembly, monomer and homodimer. Part of the essential Sec protein translocation apparatus which comprises SecA, SecYEG and auxiliary proteins SecDF. Other proteins may also be involved.

Its subcellular location is the cell membrane. It is found in the cytoplasm. It carries out the reaction ATP + H2O + cellular proteinSide 1 = ADP + phosphate + cellular proteinSide 2.. Functionally, part of the Sec protein translocase complex. Interacts with the SecYEG preprotein conducting channel. Has a central role in coupling the hydrolysis of ATP to the transfer of proteins into and across the cell membrane, serving as an ATP-driven molecular motor driving the stepwise translocation of polypeptide chains across the membrane. In Staphylococcus aureus (strain MSSA476), this protein is Protein translocase subunit SecA 2.